The sequence spans 1282 residues: Clustered mitochondria protein homolog (1282 aa).

Residues 1–43 are disordered; it reads MEQNNGTTEHPKEVLDQTNPSNEVTGVPNGNHAEGEGDQNAGE. The region spanning 341–585 is the Clu domain; that stretch reads DITRPQENYL…RITPLDVLWY (245 aa). Basic and acidic residues-rich tracts occupy residues 631 to 641 and 653 to 669; these read EAEEKAEESKP and ESEK…RVDI. Disordered stretches follow at residues 631-669 and 892-936; these read EAEE…RVDI and RSQL…PAPA. Over residues 924–936 the composition is skewed to low complexity; the sequence is QASPRPAQSPAPA. The TPR repeat unit spans residues 1003 to 1036; it reads AKLYHQLSMLYYQSDDKDAAVELARKAVIVTERT. The disordered stretch occupies residues 1202–1282; the sequence is ANLPTRLGTK…SKQSTVKPSS (81 aa). A compositionally biased stretch (polar residues) spans 1212–1223; that stretch reads PQPQVGQTTSEM. Positions 1257-1272 are enriched in basic residues; sequence TKQKKRAAARNPKLRG. The span at 1273–1282 shows a compositional bias: polar residues; it reads SKQSTVKPSS.

The protein belongs to the CLU family. In terms of assembly, may associate with the eukaryotic translation initiation factor 3 (eIF-3) complex.

The protein localises to the cytoplasm. In terms of biological role, mRNA-binding protein involved in proper cytoplasmic distribution of mitochondria. This is Clustered mitochondria protein homolog from Coccidioides immitis (strain RS) (Valley fever fungus).